Here is a 418-residue protein sequence, read N- to C-terminus: Diacylglycerol O-acyltransferase 1 (418 aa).

The disordered stretch occupies residues 1 to 30 (MSGTFNDIRRRKKEEGSPTAGITERHENKS). At 1–71 (MSGTFNDIRR…LAVAWHTSSF (71 aa)) the chain is on the cytoplasmic side. The residue at position 17 (serine 17) is a Phosphoserine. A helical membrane pass occupies residues 72–92 (VLFSIFTLFAISTPALWVLAI). The Lumenal segment spans residues 93 to 186 (PYMIYFFFDR…DYRNQECTGP (94 aa)). Residue asparagine 173 is glycosylated (N-linked (GlcNAc...) asparagine). Residues 187 to 207 (TYLFGYHPHGIGALGAFGAFA) form a helical membrane-spanning segment. The Cytoplasmic portion of the chain corresponds to 208 to 215 (TEGCNYSK). A helical transmembrane segment spans residues 216–236 (IFPGIPISLMTLVTQFHIPLY). The Lumenal segment spans residues 237 to 289 (RDYLLALGISSVSRKNALRTLSKNQSICIVVGGARESLLSSTNGTQLILNKRK). N-linked (GlcNAc...) asparagine glycans are attached at residues asparagine 260 and asparagine 279. The chain crosses the membrane as a helical span at residues 290–310 (GFIKLAIQTGNINLVPVFAFG). At 311–418 (EVDCYNVLST…VPDAELKIVG (108 aa)) the chain is on the cytoplasmic side.

It belongs to the diacylglycerol acyltransferase family.

The protein resides in the lipid droplet. It localises to the endoplasmic reticulum membrane. It catalyses the reaction an acyl-CoA + a 1,2-diacyl-sn-glycerol = a triacyl-sn-glycerol + CoA. The catalysed reaction is a 2-acylglycerol + an acyl-CoA = a 1,2-diacylglycerol + CoA. The enzyme catalyses 2-(9Z-octadecenoyl)-glycerol + (9Z)-octadecenoyl-CoA = 1,2-di-(9Z-octadecenoyl)-glycerol + CoA. Its pathway is glycerolipid metabolism; triacylglycerol biosynthesis. Functionally, catalyzes the terminal and only committed step in triacylglycerol (TAG) synthesis by using diacylglycerol (DAG) and fatty acyl-CoA as substrates. Required for storage lipid synthesis. Major DAG esterifying enzyme in stationary phase when TAG production is particularly active. Involved in lipid particle synthesis from the endoplasmic reticulum, promoting localized TAG production at discrete ER subdomains, and in ergosterol biosynthesis. Also has monoacylglycerol acyltransferase (MGAT) activity, catalyzing the acyl-CoA-dependent esterification of monoacylglycerol to diacylglycerol. Can also utilize ceramide instead of DAG, acylating the ceramides by attaching a fatty acid to the hydroxy group on the first carbon atom of the long-chain base to produce 1-O-acylceramides. The sequence is that of Diacylglycerol O-acyltransferase 1 (DGA1) from Saccharomyces cerevisiae (strain ATCC 204508 / S288c) (Baker's yeast).